A 732-amino-acid polypeptide reads, in one-letter code: Nephrocystin-1 (732 aa).

The stretch at alanine 3–arginine 105 forms a coiled coil. Phosphotyrosine; by FAK2 is present on tyrosine 46. Disordered regions lie at residues isoleucine 103–threonine 153 and threonine 205–threonine 244. Composition is skewed to acidic residues over residues threonine 115 to glutamate 145 and tyrosine 210 to aspartate 236. Phosphoserine; by CK2 is present on residues serine 121, serine 123, and serine 126. Residues glutamate 127 to lysine 150 are a coiled coil. Residues serine 152–glutamate 212 form the SH3 domain. The residue at position 349 (tyrosine 349) is a Phosphotyrosine; by FAK2. At tyrosine 721 the chain carries Phosphotyrosine; by SRC.

This sequence belongs to the nephrocystin-1 family. In terms of assembly, interacts with BCAR1, PTK2B/PYK2 and tensin. Interacts with INVS and NPHP3. Interacts with PACS1; the interaction is dependent on NPHP1 phosphorylation by CK2. Interacts with KIF7. Interacts with AHI1 and TNK2. Interacts with NPHP4 in a complex containing NPHP1, NPHP4 and RPGRIP1L. Interacts with IQCB1; the interaction likely requires additional interactors. Interacts with ANKS3. Interacts with SPATA7. Interacts with FLNA. In terms of processing, phosphorylation by CK2 is required for the interaction with PACS1 and the targeting to the base region of cilia. Widespread expression, with highest levels in pituitary gland, spinal cord, thyroid gland, testis, skeletal muscle, lymph node and trachea. Weakly expressed in heart, kidney and pancreas. Expressed in nasal epithelial cells (at protein level). Expressed in the renal collecting duct (at protein level).

Its subcellular location is the cell junction. The protein resides in the adherens junction. The protein localises to the cell projection. It is found in the cilium. It localises to the cytoplasm. Its subcellular location is the cytoskeleton. The protein resides in the cilium axoneme. The protein localises to the tight junction. Its function is as follows. Together with BCAR1 it may play a role in the control of epithelial cell polarity. Involved in the organization of apical junctions in kidney cells together with NPHP4 and RPGRIP1L/NPHP8. Does not seem to be strictly required for ciliogenesis. Seems to help to recruit PTK2B/PYK2 to cell matrix adhesions, thereby initiating phosphorylation of PTK2B/PYK2 and PTK2B/PYK2-dependent signaling. May play a role in the regulation of intraflagellar transport (IFT) during cilia assembly. Required for normal retina development. In connecting photoreceptor cilia influences the movement of some IFT proteins such as IFT88 and WDR19. Involved in spermatogenesis. The protein is Nephrocystin-1 (NPHP1) of Homo sapiens (Human).